The following is a 1112-amino-acid chain: Phytochrome E (1112 aa).

The interval 1–20 (MGFESSSSAASNMKPQPQKS) is disordered. Positions 217-387 (DIGALCDTVV…AFGLQLQMEL (171 aa)) constitute a GAF domain. A phytochromobilin-binding site is contributed by C322. 2 consecutive PAS domains span residues 595-666 (FVCE…LQGE) and 732-803 (DYKT…LISL). The 220-residue stretch at 877–1096 (YVRQEIKNPL…FFQVDLQVKT (220 aa)) folds into the Histidine kinase domain.

The protein belongs to the phytochrome family. In terms of assembly, homodimer. Contains one covalently linked phytochromobilin chromophore.

Functionally, regulatory photoreceptor which exists in two forms that are reversibly interconvertible by light: the Pr form that absorbs maximally in the red region of the spectrum and the Pfr form that absorbs maximally in the far-red region. Photoconversion of Pr to Pfr induces an array of morphogenic responses, whereas reconversion of Pfr to Pr cancels the induction of those responses. Pfr controls the expression of a number of nuclear genes including those encoding the small subunit of ribulose-bisphosphate carboxylase, chlorophyll A/B binding protein, protochlorophyllide reductase, rRNA, etc. It also controls the expression of its own gene(s) in a negative feedback fashion. The chain is Phytochrome E (PHYE) from Arabidopsis thaliana (Mouse-ear cress).